The chain runs to 481 residues: Glutamyl-tRNA(Gln) amidotransferase subunit A (481 aa).

Catalysis depends on charge relay system residues K74 and S149. S173 (acyl-ester intermediate) is an active-site residue.

This sequence belongs to the amidase family. GatA subfamily. Heterotrimer of A, B and C subunits.

The enzyme catalyses L-glutamyl-tRNA(Gln) + L-glutamine + ATP + H2O = L-glutaminyl-tRNA(Gln) + L-glutamate + ADP + phosphate + H(+). Functionally, allows the formation of correctly charged Gln-tRNA(Gln) through the transamidation of misacylated Glu-tRNA(Gln) in organisms which lack glutaminyl-tRNA synthetase. The reaction takes place in the presence of glutamine and ATP through an activated gamma-phospho-Glu-tRNA(Gln). The protein is Glutamyl-tRNA(Gln) amidotransferase subunit A of Francisella tularensis subsp. tularensis (strain WY96-3418).